We begin with the raw amino-acid sequence, 651 residues long: UvrABC system protein C (651 aa).

Positions 21 to 100 (TEPGCYLMRD…IKNQQPHFNV (80 aa)) constitute a GIY-YIG domain. Residues 210–245 (DELRQLLNQQMERYAERLDFESAARIRDQLQGIDQL) enclose the UVR domain.

The protein belongs to the UvrC family. In terms of assembly, interacts with UvrB in an incision complex.

The protein resides in the cytoplasm. The UvrABC repair system catalyzes the recognition and processing of DNA lesions. UvrC both incises the 5' and 3' sides of the lesion. The N-terminal half is responsible for the 3' incision and the C-terminal half is responsible for the 5' incision. The chain is UvrABC system protein C from Synechococcus sp. (strain CC9311).